We begin with the raw amino-acid sequence, 723 residues long: Malonamoyl-CoA synthetase vrtB (723 aa).

It belongs to the ATP-dependent AMP-binding enzyme family.

It participates in secondary metabolite biosynthesis; terpenoid biosynthesis. Malonamoyl-CoA synthetase; part of the gene cluster that mediates the biosynthesis of viridicatumtoxin, a tetracycline-like fungal meroterpenoid with a unique, fused spirobicyclic ring system. The first step of the pathway is the production of the malonamoyl-CoA starter unit for the polyketide synthase vrtA. The aldolase vrtJ may be involved in the synthesis of the malonamate substrate for malonamoyl-CoA synthetase vrtB. The polyketide synthase vrtA then may utilize the malonamoyl-CoA starter unit, followed by sequential condensation of eight malonyl-CoA units to form the polyketide backbone. The cyclization of the last ring could be mediated by the lactamase-like protein vrtG. The proposed post-PKS tailoring steps are a hydroxylation at C5 catalyzed the cytochrome P450 monooxygenase vrtE, a hydroxylation at C12a catalyzed by VrtH and/or VrtI, and an O-methylation by the O-methyltransferase vrtF. VrtC is then proposed to catalyze the transfer of a geranyl group synthesized by vrtD to the aromatic C ring of the tetracyclic polyketide intermediate of viridicatumtoxin to yield previridicatumtoxin. Finally, the cytochrome P450 monooxygenase vrtK catalyzes the spirocyclization of the geranyl moiety of previridicatumtoxin to afford viridicatumtoxin. The protein is Malonamoyl-CoA synthetase vrtB of Penicillium aethiopicum.